Reading from the N-terminus, the 82-residue chain is EMBRYO SURROUNDING FACTOR 1-like protein 10 (82 aa).

The signal sequence occupies residues 1-22; the sequence is MSSLYFAILCLFMIFLVPLHEF. Cystine bridges form between cysteine 39/cysteine 55, cysteine 44/cysteine 74, cysteine 53/cysteine 70, and cysteine 56/cysteine 63.

It belongs to the MEG family. Expressed in stems, leaves and flowers.

This is EMBRYO SURROUNDING FACTOR 1-like protein 10 (ESFL10) from Arabidopsis thaliana (Mouse-ear cress).